Here is a 396-residue protein sequence, read N- to C-terminus: Subtilisin-like protease 5 (396 aa).

A signal peptide spans 1–20 (MTGFFTILSFSLAALSVTNA). Positions 21 to 116 (AQILSVPKGA…VEPDAIISQH (96 aa)) are excised as a propeptide. The Inhibitor I9 domain occupies 37–113 (YIVVMKDDTS…VAFVEPDAII (77 aa)). N-linked (GlcNAc...) asparagine glycosylation occurs at Asn-63. A Peptidase S8 domain is found at 125–396 (PWGLSRLSNR…TRLLYNGSGR (272 aa)). Residues Asp-156 and His-187 each act as charge relay system in the active site. Residues Asn-230 and Asn-248 are each glycosylated (N-linked (GlcNAc...) asparagine). Ser-342 acts as the Charge relay system in catalysis. Over residues 377 to 389 (TIRNPGPDTTTRL) the composition is skewed to polar residues. Positions 377–396 (TIRNPGPDTTTRLLYNGSGR) are disordered. Residue Asn-392 is glycosylated (N-linked (GlcNAc...) asparagine).

The protein belongs to the peptidase S8 family.

The protein localises to the secreted. Its function is as follows. Secreted subtilisin-like serine protease with keratinolytic activity that contributes to pathogenicity. The sequence is that of Subtilisin-like protease 5 (SUB5) from Arthroderma benhamiae (Trichophyton mentagrophytes).